We begin with the raw amino-acid sequence, 287 residues long: Pantothenate synthetase (287 aa).

An ATP-binding site is contributed by 30–37 (MGALHSGH). Residue histidine 37 is the Proton donor of the active site. Position 61 (glutamine 61) interacts with (R)-pantoate. A beta-alanine-binding site is contributed by glutamine 61. ATP is bound at residue 152-155 (GQKD). Glutamine 158 serves as a coordination point for (R)-pantoate. Residues isoleucine 181 and 189–192 (ESSR) contribute to the ATP site.

It belongs to the pantothenate synthetase family. In terms of assembly, homodimer.

The protein resides in the cytoplasm. It carries out the reaction (R)-pantoate + beta-alanine + ATP = (R)-pantothenate + AMP + diphosphate + H(+). Its pathway is cofactor biosynthesis; (R)-pantothenate biosynthesis; (R)-pantothenate from (R)-pantoate and beta-alanine: step 1/1. In terms of biological role, catalyzes the condensation of pantoate with beta-alanine in an ATP-dependent reaction via a pantoyl-adenylate intermediate. This Corynebacterium efficiens (strain DSM 44549 / YS-314 / AJ 12310 / JCM 11189 / NBRC 100395) protein is Pantothenate synthetase.